The following is a 189-amino-acid chain: Elongation factor P 2 (189 aa).

It belongs to the elongation factor P family.

It is found in the cytoplasm. It participates in protein biosynthesis; polypeptide chain elongation. Functionally, involved in peptide bond synthesis. Stimulates efficient translation and peptide-bond synthesis on native or reconstituted 70S ribosomes in vitro. Probably functions indirectly by altering the affinity of the ribosome for aminoacyl-tRNA, thus increasing their reactivity as acceptors for peptidyl transferase. The protein is Elongation factor P 2 (efp2) of Lactobacillus johnsonii (strain CNCM I-12250 / La1 / NCC 533).